A 363-amino-acid polypeptide reads, in one-letter code: 3-dehydroquinate synthase (363 aa).

Residues T134 to T135, K147, and K156 contribute to the NAD(+) site. Zn(2+) contacts are provided by E189, H254, and H271.

Belongs to the sugar phosphate cyclases superfamily. Dehydroquinate synthase family. The cofactor is Co(2+). Zn(2+) is required as a cofactor. It depends on NAD(+) as a cofactor.

The protein localises to the cytoplasm. It carries out the reaction 7-phospho-2-dehydro-3-deoxy-D-arabino-heptonate = 3-dehydroquinate + phosphate. The protein operates within metabolic intermediate biosynthesis; chorismate biosynthesis; chorismate from D-erythrose 4-phosphate and phosphoenolpyruvate: step 2/7. In terms of biological role, catalyzes the conversion of 3-deoxy-D-arabino-heptulosonate 7-phosphate (DAHP) to dehydroquinate (DHQ). The protein is 3-dehydroquinate synthase of Prochlorococcus marinus (strain MIT 9312).